The following is a 2193-amino-acid chain: Genome polyprotein (2193 aa).

The interval 1-22 (MGSQVSTQRSGSHENSNSATEG) is disordered. The N-myristoyl glycine; by host moiety is linked to residue Gly2. The Cytoplasmic segment spans residues 2–1503 (GSQVSTQRSG…HLNRAVLVMQ (1502 aa)). Amphipathic alpha-helix stretches follow at residues 566–588 (GDRVADVIESSIGDSVSKALTPA) and 568–588 (RVADVIESSIGDSVSKALTPA). Active-site for protease 2A activity residues include His883 and Asp901. Zn(2+)-binding residues include Cys918 and Cys920. Residue Cys972 is the For protease 2A activity of the active site. Zn(2+)-binding residues include Cys978 and His980. The tract at residues 1112–1184 (SASWLKKFND…EQSAASQEDL (73 aa)) is membrane-binding. The segment at 1112–1250 (SASWLKKFND…SPGTGKSLAT (139 aa)) is oligomerization. The segment at 1133–1137 (FNKIS) is RNA-binding. Residues 1216-1374 (EKRMNNYMQF…YKTDLGRLDA (159 aa)) enclose the SF3 helicase domain. 1240 to 1247 (GSPGTGKS) provides a ligand contact to ATP. Cys1381, Cys1392, and Cys1397 together coordinate Zn(2+). The segment at 1381–1397 (CTENNTANFKRCSPLVC) adopts a C4-type; degenerate zinc-finger fold. The segment at 1424-1431 (EYNNRSAI) is RNA-binding. The segment at 1435–1440 (IEALFQ) is oligomerization. The stretch at 1504-1519 (SIATVVAVVSLVYVIY) is an intramembrane region. Residues 1520-2193 (KLFAGFQGAY…NLRRNWLELF (674 aa)) lie on the Cytoplasmic side of the membrane. Tyr1529 bears the O-(5'-phospho-RNA)-tyrosine mark. A Peptidase C3 domain is found at 1549 to 1727 (GPSLDFALSL…FCAGLKRSYF (179 aa)). Catalysis depends on for protease 3C activity residues His1588, Glu1619, and Cys1695. The RdRp catalytic domain occupies 1958-2073 (GSLFAFDYSG…ASYPFPIDCL (116 aa)). Mg(2+) is bound by residues Asp1964 and Asp2060.

It belongs to the picornaviruses polyprotein family. As to quaternary structure, interacts with capsid protein VP1 and capsid protein VP3 to form heterotrimeric protomers. In terms of assembly, interacts with capsid protein VP0, and capsid protein VP3 to form heterotrimeric protomers. Five protomers subsequently associate to form pentamers which serve as building blocks for the capsid. Interacts with capsid protein VP2, capsid protein VP3 and capsid protein VP4 following cleavage of capsid protein VP0. Interacts with host SCARB2. Interacts with host ARF6; this interaction mediates viral endocytosis. Interacts with capsid protein VP1 and capsid protein VP3 in the mature capsid. Interacts with host SCARB2. As to quaternary structure, interacts with capsid protein VP0 and capsid protein VP1 to form heterotrimeric protomers. Five protomers subsequently associate to form pentamers which serve as building blocks for the capsid. Interacts with capsid protein VP4 in the mature capsid. Interacts with protein 2C; this interaction may be important for virion morphogenesis. In terms of assembly, interacts with capsid protein VP1 and capsid protein VP3. Homodimer. Interacts with host SPOP; this interaction promotes protease 2A ubiquitination and subsequent degradation. As to quaternary structure, interacts with host BAX; this interaction activates the mitochondrial apoptotic pathway. Interacts with host ILF2. In terms of assembly, homohexamer; forms a hexameric ring structure with 6-fold symmetry characteristic of AAA+ ATPases. Interacts (via N-terminus) with host RTN3 (via reticulon domain); this interaction is important for viral replication. Interacts with capsid protein VP3; this interaction may be important for virion morphogenesis. Interacts with protein 3CD. As to quaternary structure, homodimer. Interacts with host GBF1. Interacts (via GOLD domain) with host ACBD3 (via GOLD domain); this interaction allows the formation of a viral protein 3A/ACBD3 heterotetramer with a 2:2 stoichiometry, which will stimulate the recruitment of host PI4KB in order to synthesize PI4P at the viral RNA replication sites. In terms of assembly, interacts with RNA-directed RNA polymerase. Interacts with host IFIH1/MDA5; this interaction inhibits host IFIH1. Interacts with host RIGI. As to quaternary structure, interacts with protein 3AB and with RNA-directed RNA polymerase. Interacts with host PPP1R15A. In terms of assembly, interacts with Viral protein genome-linked and with protein 3CD. Interacts with host NLRP3. Mg(2+) is required as a cofactor. In terms of processing, specific enzymatic cleavages in vivo by the viral proteases yield processing intermediates and the mature proteins. Post-translationally, myristoylation is required for the formation of pentamers during virus assembly. Further assembly of 12 pentamers and a molecule of genomic RNA generates the provirion. During virion maturation, immature virions are rendered infectious following cleavage of VP0 into VP4 and VP2. This maturation seems to be an autocatalytic event triggered by the presence of RNA in the capsid and it is followed by a conformational change infectious virion. In terms of processing, myristoylation is required during RNA encapsidation and formation of the mature virus particle. Post-translationally, VPg is uridylylated by the polymerase into VPg-pUpU. This acts as a nucleotide-peptide primer for the genomic RNA replication.

Its subcellular location is the virion. It localises to the host cytoplasm. It is found in the host cytoplasmic vesicle membrane. The protein resides in the host nucleus. It carries out the reaction a ribonucleoside 5'-triphosphate + H2O = a ribonucleoside 5'-diphosphate + phosphate + H(+). The enzyme catalyses Selective cleavage of Tyr-|-Gly bond in the picornavirus polyprotein.. It catalyses the reaction RNA(n) + a ribonucleoside 5'-triphosphate = RNA(n+1) + diphosphate. The catalysed reaction is Selective cleavage of Gln-|-Gly bond in the poliovirus polyprotein. In other picornavirus reactions Glu may be substituted for Gln, and Ser or Thr for Gly.. With respect to regulation, replication or transcription is subject to high level of random mutations by the nucleotide analog ribavirin. Its function is as follows. Forms an icosahedral capsid of pseudo T=3 symmetry with capsid proteins VP2 and VP3. The capsid is 300 Angstroms in diameter, composed of 60 copies of each capsid protein and enclosing the viral positive strand RNA genome. Capsid protein VP1 mainly forms the vertices of the capsid. Capsid protein VP1, together with VP2, interacts with host cell receptor SCARB2 to provide virion attachment to target host cells. This attachment induces virion internalization predominantly through clathrin-dependent endocytosis. After binding to its receptor, the capsid undergoes conformational changes. Capsid protein VP1 N-terminus (that contains an amphipathic alpha-helix) and capsid protein VP4 are externalized. Together, they shape a pore in the host membrane through which viral genome is translocated to host cell cytoplasm. Functionally, forms an icosahedral capsid of pseudo T=3 symmetry with capsid proteins VP2 and VP3. The capsid is 300 Angstroms in diameter, composed of 60 copies of each capsid protein and enclosing the viral positive strand RNA genome. Capsid protein VP2, together with VP1, interacts with host cell receptor SCARB2 to provide virion attachment to target host cells. In terms of biological role, forms an icosahedral capsid of pseudo T=3 symmetry with capsid proteins VP2 and VP3. The capsid is 300 Angstroms in diameter, composed of 60 copies of each capsid protein and enclosing the viral positive strand RNA genome. Lies on the inner surface of the capsid shell. After binding to the host receptor, the capsid undergoes conformational changes. Capsid protein VP4 is released, Capsid protein VP1 N-terminus is externalized, and together, they shape a pore in the host membrane through which the viral genome is translocated into the host cell cytoplasm. Its function is as follows. Component of immature procapsids, which is cleaved into capsid proteins VP4 and VP2 after maturation. Allows the capsid to remain inactive before the maturation step. Functionally, cysteine protease that cleaves viral polyprotein and specific host proteins. It is responsible for the autocatalytic cleavage between the P1 and P2 regions, which is the first cleavage occurring in the polyprotein. Also cleaves the host translation initiation factor EIF4G1, in order to shut down the capped cellular mRNA translation. Inhibits the host nucleus-cytoplasm protein and RNA trafficking by cleaving host members of the nuclear pores. Counteracts stress granule formation probably by antagonizing its assembly or promoting its dissassembly. Cleaves and inhibits host IFIH1/MDA5, thereby inhibiting the type-I IFN production and the establishment of the antiviral state. Cleaves and inhibits host MAVS, thereby inhibiting the type-I IFN production and the establishment of the antiviral state. In terms of biological role, plays an essential role in the virus replication cycle by acting as a viroporin. Creates a pore in the host endoplasmic reticulum and as a consequence releases Ca2+ in the cytoplasm of infected cell. In turn, high levels of cytoplasmic calcium may trigger membrane trafficking and transport of viral ER-associated proteins to viroplasms, sites of viral genome replication. Also activates the mitochondrial apoptotic pathway by activating host BAX. Induces and associates with structural rearrangements of intracellular membranes. Displays RNA-binding, nucleotide binding and NTPase activities. May play a role in virion morphogenesis and viral RNA encapsidation by interacting with the capsid protein VP3. Its function is as follows. Localizes the viral replication complex to the surface of membranous vesicles. Together with protein 3CD binds the Cis-Active RNA Element (CRE) which is involved in RNA synthesis initiation. Acts as a cofactor to stimulate the activity of 3D polymerase, maybe through a nucleid acid chaperone activity. Functionally, localizes the viral replication complex to the surface of membranous vesicles. It inhibits host cell endoplasmic reticulum-to-Golgi apparatus transport and causes the disassembly of the Golgi complex, possibly through GBF1 interaction. This would result in depletion of MHC, trail receptors and IFN receptors at the host cell surface. Plays an essential role in viral RNA replication by recruiting ACBD3 and PI4KB at the viral replication sites, thereby allowing the formation of the rearranged membranous structures where viral replication takes place. In terms of biological role, acts as a primer for viral RNA replication and remains covalently bound to viral genomic RNA. VPg is uridylylated prior to priming replication into VPg-pUpU. The oriI viral genomic sequence may act as a template for this. The VPg-pUpU is then used as primer on the genomic RNA poly(A) by the RNA-dependent RNA polymerase to replicate the viral genome. During genome replication, the VPg-RNA linkage is removed by the host TDP2, thereby accelerating replication. During the late stage of the replication cycle, host TDP2 is excluded from sites of viral RNA synthesis and encapsidation, allowing for the generation of progeny virions. Involved in the viral replication complex and viral polypeptide maturation. It exhibits protease activity with a specificity and catalytic efficiency that is different from protease 3C. Protein 3CD lacks polymerase activity. Protein 3CD binds to the 5'UTR of the viral genome. Regulates host protein expression by interacting with host PPP1R15A to support viral replication. Its function is as follows. Major viral protease that mediates proteolytic processing of the polyprotein. Cleaves host EIF5B, contributing to host translation shutoff. Also cleaves host PABPC1, contributing to host translation shutoff. Disassembles host cytoplasmic stress granules by cleaving host G3BP1, although this effect is less prononced than the inhibition induced by protease 2A. Cleaves host RIGI and thus contributes to the inhibition of type I interferon production. Cleaves host IRF7 and thus contributes to the inhibition of type I interferon production. Cleaves host HNRNPA1 thereby increasing the translation of apoptosis protease activating factor APAF1, leading to apoptosis of the host cell. Cleaves host NLRP1, triggers host N-glycine-mediated degradation of the autoinhibitory NLRP1 N-terminal fragment. Cleaves and inactivates host GSDMD, preventing GSDMD-mediated pyroptosis. Also promotes apoptosis in infected cell through cleaving of host PINX1, a telomere binding protein in order to facilitate viral release. Impairs host PML-NBs production via PML cleavage and counter its antiviral activities. Functionally, replicates the viral genomic RNA on the surface of intracellular membranes. May form linear arrays of subunits that propagate along a strong head-to-tail interaction called interface-I. Covalently attaches UMP to a tyrosine of VPg, which is used to prime RNA synthesis. The positive stranded RNA genome is first replicated at virus induced membranous vesicles, creating a dsRNA genomic replication form. This dsRNA is then used as template to synthesize positive stranded RNA genomes. ss(+)RNA genomes are either translated, replicated or encapsidated. Facilitates the assembly of NLRP3 inflammasome complex and stimulates the cleavage of host pro-CASP1 and the secretion of IL-1beta. This Human enterovirus 71 (strain USA/BrCr/1970) (EV71) protein is Genome polyprotein.